The primary structure comprises 597 residues: Elongation factor 4 (597 aa).

Positions 2–184 (DHIRNFSIIA…ALIAKVPPPK (183 aa)) constitute a tr-type G domain. GTP-binding positions include 14 to 19 (DHGKST) and 131 to 134 (NKID).

This sequence belongs to the TRAFAC class translation factor GTPase superfamily. Classic translation factor GTPase family. LepA subfamily.

Its subcellular location is the cell inner membrane. The catalysed reaction is GTP + H2O = GDP + phosphate + H(+). Required for accurate and efficient protein synthesis under certain stress conditions. May act as a fidelity factor of the translation reaction, by catalyzing a one-codon backward translocation of tRNAs on improperly translocated ribosomes. Back-translocation proceeds from a post-translocation (POST) complex to a pre-translocation (PRE) complex, thus giving elongation factor G a second chance to translocate the tRNAs correctly. Binds to ribosomes in a GTP-dependent manner. The polypeptide is Elongation factor 4 (Burkholderia vietnamiensis (strain G4 / LMG 22486) (Burkholderia cepacia (strain R1808))).